Reading from the N-terminus, the 333-residue chain is Taste receptor type 2 member 110 (333 aa).

The Extracellular portion of the chain corresponds to 1–13; the sequence is MFSQIISTSDIFT. The chain crosses the membrane as a helical span at residues 14 to 34; that stretch reads FTIILFVELVIGILGNGFIAL. Over 35–60 the chain is Cytoplasmic; it reads VNIMDWTKRRSISSADQILTALAITR. Residues 61–81 traverse the membrane as a helical segment; that stretch reads FLYVWFMIICILLFMLCPHLL. Over 82 to 89 the chain is Extracellular; sequence TRSEIVTS. A helical membrane pass occupies residues 90–110; that stretch reads IGIIWIVNNHFSVWLATCLGV. At 111–133 the chain is on the cytoplasmic side; the sequence is FYFLKIANFSNSLFLYLKWRVKK. The chain crosses the membrane as a helical span at residues 134–154; that stretch reads VVLMIIQVSMIFLILNLLSLS. Over 155–205 the chain is Extracellular; that stretch reads MYDQFSIDVYEGNTSYNLGDSTPFPTISLFINSSKVFVITNSSHIFLPINS. N-linked (GlcNAc...) asparagine glycans are attached at residues asparagine 186 and asparagine 195. A helical membrane pass occupies residues 206 to 226; sequence LFMLIPFTVSLVAFLMLIFSL. Residues 227-255 lie on the Cytoplasmic side of the membrane; sequence WKHHKKMQVNAKPPRDASTMAHIKALQTG. The chain crosses the membrane as a helical span at residues 256–276; that stretch reads FSFLLLYAVYLLFIVIGMLSL. Topologically, residues 277-283 are extracellular; it reads RLIGGKL. Residues 284–304 traverse the membrane as a helical segment; sequence ILLFDHISGIGFPISHSFVLI. Topologically, residues 305 to 333 are cytoplasmic; the sequence is LGNNKLRQASLSVLHCLRCRSKDMDTMGP.

This sequence belongs to the G-protein coupled receptor T2R family.

It localises to the membrane. In terms of biological role, gustducin-coupled receptor implicated in the perception of bitter compounds in the oral cavity and the gastrointestinal tract. Signals through PLCB2 and the calcium-regulated cation channel TRPM5. The protein is Taste receptor type 2 member 110 of Mus musculus (Mouse).